The sequence spans 337 residues: MTLLMIFTILLVASSQIEGHLKFDIHDAQHYFETFIINYNKQYPDTKTKNYRFKIFKQNLEDINEKNKLNDSAIYNINKFSDLSKNELLTKYTGLTSKKPSNMVRSTSNFCNVIHLDAPPDVHDELPQNFDWRVNNKMTSVKDQGACGSCWAHAAVGTLETLYAIKHNYLINLSEQQLIDCDSANMACDGGLMHTAFEQLMNAGGLMEEIDYPYQGTKGVCKIDNKKFALSVSSCKRYIFQNEENLKKELITMGPIAMAIDAASISTYSKGIIHFCENLGLNHAVLLVGYGTEGGVSYWTLKNSWGSDWGEDGYFRVKRNINACGLNNQLAASATIH.

The first 19 residues, 1–19 (MTLLMIFTILLVASSQIEG), serve as a signal peptide directing secretion. Positions 20–126 (HLKFDIHDAQ…DAPPDVHDEL (107 aa)) are cleaved as a propeptide — activation peptide. Disulfide bonds link Cys-147/Cys-188, Cys-181/Cys-221, and Cys-276/Cys-324. Residue Cys-150 is part of the active site. Asn-172 is a glycosylation site (N-linked (GlcNAc...) asparagine; by host). Residues His-283 and Asn-303 contribute to the active site.

Belongs to the peptidase C1 family. Post-translationally, synthesized as an inactive proenzyme and activated by proteolytic removal of the inhibitory propeptide.

It catalyses the reaction Endopeptidase of broad specificity, hydrolyzing substrates of both cathepsin L and cathepsin B.. Its function is as follows. Cysteine protease that plays an essential role in host liquefaction to facilitate horizontal transmission of the virus. May participate in the degradation of foreign protein expressed by the baculovirus system. This Adoxophyes honmai (Smaller tea tortrix moth) protein is Viral cathepsin (VCATH).